The primary structure comprises 852 residues: Cytochrome P450 monooxygenase mpaDE (852 aa).

The Lumenal segment spans residues 1–6 (MDYLII). Residues 7–29 (IRITAVAVVLYLTRYVCCLYLHL) traverse the membrane as a helical segment. Residues 30–852 (QDVPGPLFAK…DLEDAMEGTK (823 aa)) lie on the Cytoplasmic side of the membrane. C448 is a binding site for heme.

It belongs to the cytochrome P450 family. The cofactor is heme.

Its subcellular location is the endoplasmic reticulum membrane. The catalysed reaction is 5-methylorsellinate + reduced [NADPH--hemoprotein reductase] + O2 = 4,6-dihydroxy-2-(hydroxymethyl)-3-methylbenzoate + oxidized [NADPH--hemoprotein reductase] + H2O + H(+). It catalyses the reaction 4,6-dihydroxy-2-(hydroxymethyl)-3-methylbenzoate + H(+) = 5,7-dihydroxy-4-methylphthalide + H2O. It functions in the pathway secondary metabolite biosynthesis; terpenoid biosynthesis. Its function is as follows. Cytochrome P450 monooxygenase; part of the gene cluster that mediates the biosynthesis of mycophenolic acid (MPA), the first isolated antibiotic natural product in the world obtained from a culture of Penicillium brevicompactum in 1893. MpaDE is an endoplasmic reticulum-bound enzyme that catalyzes the conversion of 5-methylorsellinic acid (5MOA) into the phthalide compound 5,7-dihydroxy-4,6-dimethylphthalide (DHMP). MpaDE first catalyzes hydroxylation of 5-MOA to 4,6-dihydroxy-2-(hydroxymethyl)-3-methylbenzoic acid (DHMB), and then acts as a lactone synthase that catalyzes the ring closure to convert DHMB into DHMP. The first step of the pathway is the synthesis of 5-methylorsellinic acid (5MOA) by the cytosolic polyketide synthase mpaC. 5MOA is then converted to the phthalide compound 5,7-dihydroxy-4,6-dimethylphthalide (DHMP) by the endoplasmic reticulum-bound cytochrome P450 monooxygenase mpaDE. MpaDE first catalyzes hydroxylation of 5-MOA to 4,6-dihydroxy-2-(hydroxymethyl)-3-methylbenzoic acid (DHMB). MpaDE then acts as a lactone synthase that catalyzes the ring closure to convert DHMB into DHMP. The next step is the prenylation of DHMP by the Golgi apparatus-associated prenyltransferase mpaA to yield farnesyl-DHMP (FDHMP). The ER-bound oxygenase mpaB then mediates the oxidative cleavage the C19-C20 double bond in FDHMP to yield FDHMP-3C via a mycophenolic aldehyde intermediate. The O-methyltransferase mpaG catalyzes the methylation of FDHMP-3C to yield MFDHMP-3C. After the cytosolic methylation of FDHMP-3C, MFDHMP-3C enters into peroxisomes probably via free diffusion due to its low molecular weight. Upon a peroxisomal CoA ligation reaction, catalyzed by a beta-oxidation component enzyme acyl-CoA ligase ACL891, MFDHMP-3C-CoA would then be restricted to peroxisomes for the following beta-oxidation pathway steps. The peroxisomal beta-oxidation machinery than converts MFDHMP-3C-CoA into MPA_CoA, via a beta-oxidation chain-shortening process. Finally mpaH acts as a peroxisomal acyl-CoA hydrolase with high substrate specificity toward MPA-CoA to release the final product MPA. The sequence is that of Cytochrome P450 monooxygenase mpaDE from Penicillium roqueforti (strain FM164).